The following is a 177-amino-acid chain: Large ribosomal subunit protein uL6 (177 aa).

Belongs to the universal ribosomal protein uL6 family. Part of the 50S ribosomal subunit.

Functionally, this protein binds to the 23S rRNA, and is important in its secondary structure. It is located near the subunit interface in the base of the L7/L12 stalk, and near the tRNA binding site of the peptidyltransferase center. In Paracidovorax citrulli (strain AAC00-1) (Acidovorax citrulli), this protein is Large ribosomal subunit protein uL6.